The primary structure comprises 269 residues: 4-hydroxy-tetrahydrodipicolinate reductase (269 aa).

NAD(+) is bound by residues Gly-11 to Met-16 and Glu-37. Arg-38 is an NADP(+) binding site. Residues Gly-101–Thr-103 and Ala-125–Met-128 contribute to the NAD(+) site. His-158 functions as the Proton donor/acceptor in the catalytic mechanism. A (S)-2,3,4,5-tetrahydrodipicolinate-binding site is contributed by His-159. Lys-162 functions as the Proton donor in the catalytic mechanism. Gly-168 to Thr-169 provides a ligand contact to (S)-2,3,4,5-tetrahydrodipicolinate.

The protein belongs to the DapB family.

The protein localises to the cytoplasm. It carries out the reaction (S)-2,3,4,5-tetrahydrodipicolinate + NAD(+) + H2O = (2S,4S)-4-hydroxy-2,3,4,5-tetrahydrodipicolinate + NADH + H(+). It catalyses the reaction (S)-2,3,4,5-tetrahydrodipicolinate + NADP(+) + H2O = (2S,4S)-4-hydroxy-2,3,4,5-tetrahydrodipicolinate + NADPH + H(+). It functions in the pathway amino-acid biosynthesis; L-lysine biosynthesis via DAP pathway; (S)-tetrahydrodipicolinate from L-aspartate: step 4/4. Its function is as follows. Catalyzes the conversion of 4-hydroxy-tetrahydrodipicolinate (HTPA) to tetrahydrodipicolinate. The polypeptide is 4-hydroxy-tetrahydrodipicolinate reductase (Ruegeria sp. (strain TM1040) (Silicibacter sp.)).